Here is a 459-residue protein sequence, read N- to C-terminus: Ribulose bisphosphate carboxylase (459 aa).

Substrate is bound at residue Asn111. The Proton acceptor role is filled by Lys166. A substrate-binding site is contributed by Lys168. Mg(2+) contacts are provided by Lys191, Asp193, and Glu194. At Lys191 the chain carries N6-carboxylysine. Residue His287 is the Proton acceptor of the active site. Residues Arg288, His321, and Ser368 each contribute to the substrate site.

The protein belongs to the RuBisCO large chain family. Type II subfamily. Homodimer. Requires Mg(2+) as cofactor.

The enzyme catalyses 2 (2R)-3-phosphoglycerate + 2 H(+) = D-ribulose 1,5-bisphosphate + CO2 + H2O. The catalysed reaction is D-ribulose 1,5-bisphosphate + O2 = 2-phosphoglycolate + (2R)-3-phosphoglycerate + 2 H(+). RuBisCO catalyzes two reactions: the carboxylation of D-ribulose 1,5-bisphosphate, the primary event in carbon dioxide fixation, as well as the oxidative fragmentation of the pentose substrate. Both reactions occur simultaneously and in competition at the same active site. This chain is Ribulose bisphosphate carboxylase, found in Dechloromonas aromatica (strain RCB).